A 235-amino-acid polypeptide reads, in one-letter code: Fibrillarin-like rRNA/tRNA 2'-O-methyltransferase (235 aa).

Residues 91 to 92 (TT), 110 to 111 (EF), 137 to 138 (DA), and 157 to 160 (DVAQ) each bind S-adenosyl-L-methionine.

This sequence belongs to the methyltransferase superfamily. Fibrillarin family. In terms of assembly, interacts with nop5. Component of box C/D small ribonucleoprotein (sRNP) particles that contain rpl7ae, FlpA and nop5, plus a guide RNA.

In terms of biological role, involved in pre-rRNA and tRNA processing. Utilizes the methyl donor S-adenosyl-L-methionine to catalyze the site-specific 2'-hydroxyl methylation of ribose moieties in rRNA and tRNA. Site specificity is provided by a guide RNA that base pairs with the substrate. Methylation occurs at a characteristic distance from the sequence involved in base pairing with the guide RNA. The sequence is that of Fibrillarin-like rRNA/tRNA 2'-O-methyltransferase from Pyrobaculum aerophilum (strain ATCC 51768 / DSM 7523 / JCM 9630 / CIP 104966 / NBRC 100827 / IM2).